A 1264-amino-acid chain; its full sequence is Kinesin-like protein KIN-14B (1264 aa).

Positions M1–W10 are enriched in polar residues. Positions M1 to S52 are disordered. Residues E18–H30 show a composition bias toward basic and acidic residues. Residues E53–E84 are a coiled coil. The Kinesin motor domain occupies N138–T452. An ATP-binding site is contributed by G219 to T226. 3 coiled-coil regions span residues I462 to V511, Q545 to D592, and T617 to K640. Positions A588–A615 are disordered. Basic and acidic residues predominate over residues L589–L600. Positions S652–Q668 are enriched in low complexity. Disordered stretches follow at residues S652 to K684 and P1117 to S1136.

Belongs to the TRAFAC class myosin-kinesin ATPase superfamily. Kinesin family. KIN-14 subfamily. In terms of assembly, homodimer and heterodimer with KCA1. Interacts with CDKA-1. Interacts with At4g14310. In terms of tissue distribution, expressed in roots, leaves, stems and flowers.

Its subcellular location is the cell membrane. Its function is as follows. Kinesin-like protein required for chloroplast movements and anchor to the plasma membrane. Mediates chloroplast movement via chloroplast actin (cp-actin) filaments. Required for the chloroplast avoidance response under high intensity blue light. Mediates redundantly with CHUP1 the nuclear avoidance response under high intensity blue light. May be involved in division plane determination. In Arabidopsis thaliana (Mouse-ear cress), this protein is Kinesin-like protein KIN-14B.